The following is a 592-amino-acid chain: A-type ATP synthase subunit A (592 aa).

An ATP-binding site is contributed by 233–240 (GPFGSGKT).

This sequence belongs to the ATPase alpha/beta chains family. In terms of assembly, has multiple subunits with at least A(3), B(3), C, D, E, F, H, I and proteolipid K(x).

It localises to the cell membrane. It carries out the reaction ATP + H2O + 4 H(+)(in) = ADP + phosphate + 5 H(+)(out). Its function is as follows. Component of the A-type ATP synthase that produces ATP from ADP in the presence of a proton gradient across the membrane. The A chain is the catalytic subunit. In Saccharolobus islandicus (strain Y.G.57.14 / Yellowstone #1) (Sulfolobus islandicus), this protein is A-type ATP synthase subunit A.